A 526-amino-acid polypeptide reads, in one-letter code: Exodeoxyribonuclease 7 large subunit (526 aa).

Positions 499-526 (AGEDGTPSQAPKKRPARAGEPTKQGSLF) are disordered.

It belongs to the XseA family. In terms of assembly, heterooligomer composed of large and small subunits.

It is found in the cytoplasm. The enzyme catalyses Exonucleolytic cleavage in either 5'- to 3'- or 3'- to 5'-direction to yield nucleoside 5'-phosphates.. Its function is as follows. Bidirectionally degrades single-stranded DNA into large acid-insoluble oligonucleotides, which are then degraded further into small acid-soluble oligonucleotides. The sequence is that of Exodeoxyribonuclease 7 large subunit from Sinorhizobium medicae (strain WSM419) (Ensifer medicae).